Consider the following 248-residue polypeptide: Ribosomal RNA small subunit methyltransferase J (248 aa).

Residues arginine 98–aspartate 99, glutamate 114–arginine 115, serine 150–serine 151, and aspartate 168 contribute to the S-adenosyl-L-methionine site.

Belongs to the methyltransferase superfamily. RsmJ family.

Its subcellular location is the cytoplasm. The enzyme catalyses guanosine(1516) in 16S rRNA + S-adenosyl-L-methionine = N(2)-methylguanosine(1516) in 16S rRNA + S-adenosyl-L-homocysteine + H(+). Its function is as follows. Specifically methylates the guanosine in position 1516 of 16S rRNA. The protein is Ribosomal RNA small subunit methyltransferase J of Shewanella baltica (strain OS223).